We begin with the raw amino-acid sequence, 467 residues long: 3-isopropylmalate dehydratase large subunit (467 aa).

Residues cysteine 347, cysteine 407, and cysteine 410 each coordinate [4Fe-4S] cluster.

It belongs to the aconitase/IPM isomerase family. LeuC type 1 subfamily. As to quaternary structure, heterodimer of LeuC and LeuD. The cofactor is [4Fe-4S] cluster.

The enzyme catalyses (2R,3S)-3-isopropylmalate = (2S)-2-isopropylmalate. The protein operates within amino-acid biosynthesis; L-leucine biosynthesis; L-leucine from 3-methyl-2-oxobutanoate: step 2/4. Its function is as follows. Catalyzes the isomerization between 2-isopropylmalate and 3-isopropylmalate, via the formation of 2-isopropylmaleate. In Trichormus variabilis (strain ATCC 29413 / PCC 7937) (Anabaena variabilis), this protein is 3-isopropylmalate dehydratase large subunit.